The following is a 242-amino-acid chain: Small ribosomal subunit protein uS2 (242 aa).

This sequence belongs to the universal ribosomal protein uS2 family.

The chain is Small ribosomal subunit protein uS2 from Shouchella clausii (strain KSM-K16) (Alkalihalobacillus clausii).